A 671-amino-acid chain; its full sequence is DNA ligase (671 aa).

NAD(+) is bound by residues 31–35, 80–81, and glutamate 110; these read DAEYD and SL. Lysine 112 acts as the N6-AMP-lysine intermediate in catalysis. NAD(+) contacts are provided by arginine 133, glutamate 167, lysine 283, and lysine 307. Zn(2+) contacts are provided by cysteine 401, cysteine 404, cysteine 419, and cysteine 424. Residues 587–671 form the BRCT domain; that stretch reads EEELVFAGKT…YLPDEGGLNE (85 aa).

The protein belongs to the NAD-dependent DNA ligase family. LigA subfamily. The cofactor is Mg(2+). Mn(2+) is required as a cofactor.

The catalysed reaction is NAD(+) + (deoxyribonucleotide)n-3'-hydroxyl + 5'-phospho-(deoxyribonucleotide)m = (deoxyribonucleotide)n+m + AMP + beta-nicotinamide D-nucleotide.. In terms of biological role, DNA ligase that catalyzes the formation of phosphodiester linkages between 5'-phosphoryl and 3'-hydroxyl groups in double-stranded DNA using NAD as a coenzyme and as the energy source for the reaction. It is essential for DNA replication and repair of damaged DNA. The sequence is that of DNA ligase from Listeria monocytogenes serotype 4b (strain CLIP80459).